Reading from the N-terminus, the 514-residue chain is ATP synthase subunit alpha (514 aa).

ATP is bound at residue 170–177 (GDRQIGKT).

This sequence belongs to the ATPase alpha/beta chains family. F-type ATPases have 2 components, CF(1) - the catalytic core - and CF(0) - the membrane proton channel. CF(1) has five subunits: alpha(3), beta(3), gamma(1), delta(1), epsilon(1). CF(0) has three main subunits: a(1), b(2) and c(9-12). The alpha and beta chains form an alternating ring which encloses part of the gamma chain. CF(1) is attached to CF(0) by a central stalk formed by the gamma and epsilon chains, while a peripheral stalk is formed by the delta and b chains.

The protein localises to the cell inner membrane. It carries out the reaction ATP + H2O + 4 H(+)(in) = ADP + phosphate + 5 H(+)(out). Functionally, produces ATP from ADP in the presence of a proton gradient across the membrane. The alpha chain is a regulatory subunit. The chain is ATP synthase subunit alpha from Pseudomonas putida (strain ATCC 47054 / DSM 6125 / CFBP 8728 / NCIMB 11950 / KT2440).